Here is a 253-residue protein sequence, read N- to C-terminus: 5'-nucleotidase SurE (253 aa).

Positions 8, 9, 39, and 96 each coordinate a divalent metal cation.

This sequence belongs to the SurE nucleotidase family. Requires a divalent metal cation as cofactor.

The protein localises to the cytoplasm. It catalyses the reaction a ribonucleoside 5'-phosphate + H2O = a ribonucleoside + phosphate. Functionally, nucleotidase that shows phosphatase activity on nucleoside 5'-monophosphates. In Rhodopirellula baltica (strain DSM 10527 / NCIMB 13988 / SH1), this protein is 5'-nucleotidase SurE.